A 323-amino-acid chain; its full sequence is Peroxisomal targeting signal 2 receptor (323 aa).

6 WD repeats span residues 65-96, 109-141, 153-184, 196-227, 240-271, and 284-315; these read DWND…QLWD, EHAQ…KLWD, GHES…RIWD, AHQA…RGWD, GHTY…RFWN, and HHTE…KIYD.

It belongs to the WD repeat peroxin-7 family. Interacts with PEX5; interaction only takes place when PEX7 is associated with cargo proteins. Interacts with VWA8. Ubiquitous. Highest expression in pancreas, skeletal muscle and heart.

The protein localises to the cytoplasm. It localises to the cytosol. Its subcellular location is the peroxisome matrix. Receptor required for the peroxisomal import of proteins containing a C-terminal PTS2-type peroxisomal targeting signal. Specifically binds to cargo proteins containing a PTS2 peroxisomal targeting signal in the cytosol. Cargo protein-binding triggers interaction with PEX5 and formation of a ternary complex composed of PEX5 and PEX7 along with PTS2-containing cargo proteins, which is tranlocated into peroxisomes by passing through the PEX13-PEX14 docking complex. The chain is Peroxisomal targeting signal 2 receptor from Homo sapiens (Human).